The primary structure comprises 436 residues: GTPase Der (436 aa).

2 EngA-type G domains span residues 4 to 167 (PIVA…GEEE) and 176 to 351 (IRLS…ENHK). Residues 10–17 (GRPNVGKS), 57–61 (DTGGI), 119–122 (NKVD), 182–189 (GRPNVGKS), 229–233 (DTAGM), and 294–297 (NKWD) each bind GTP. A KH-like domain is found at 352-436 (KRVQSSTLNE…PIHIIARKRN (85 aa)).

It belongs to the TRAFAC class TrmE-Era-EngA-EngB-Septin-like GTPase superfamily. EngA (Der) GTPase family. In terms of assembly, associates with the 50S ribosomal subunit.

GTPase that plays an essential role in the late steps of ribosome biogenesis. This is GTPase Der from Staphylococcus aureus (strain Mu3 / ATCC 700698).